The following is a 437-amino-acid chain: tRNA-2-methylthio-N(6)-dimethylallyladenosine synthase (437 aa).

In terms of domain architecture, MTTase N-terminal spans 5-121; the sequence is KKLYIKTYGC…LPELTARAAT (117 aa). [4Fe-4S] cluster-binding residues include Cys-14, Cys-50, Cys-84, Cys-159, Cys-163, and Cys-166. One can recognise a Radical SAM core domain in the interval 145-371; the sequence is AKRGPTAFLT…QALLTRQQRA (227 aa). Positions 374–436 constitute a TRAM domain; sequence DAKVGTTARV…ANSLRGVLIA (63 aa).

This sequence belongs to the methylthiotransferase family. MiaB subfamily. Monomer. The cofactor is [4Fe-4S] cluster.

The protein localises to the cytoplasm. It catalyses the reaction N(6)-dimethylallyladenosine(37) in tRNA + (sulfur carrier)-SH + AH2 + 2 S-adenosyl-L-methionine = 2-methylsulfanyl-N(6)-dimethylallyladenosine(37) in tRNA + (sulfur carrier)-H + 5'-deoxyadenosine + L-methionine + A + S-adenosyl-L-homocysteine + 2 H(+). Functionally, catalyzes the methylthiolation of N6-(dimethylallyl)adenosine (i(6)A), leading to the formation of 2-methylthio-N6-(dimethylallyl)adenosine (ms(2)i(6)A) at position 37 in tRNAs that read codons beginning with uridine. The protein is tRNA-2-methylthio-N(6)-dimethylallyladenosine synthase of Dinoroseobacter shibae (strain DSM 16493 / NCIMB 14021 / DFL 12).